A 554-amino-acid polypeptide reads, in one-letter code: Methyl-CpG-binding domain protein 4 (554 aa).

A disordered region spans residues 1–23 (MESPNLGDNRVRGESLVPDPPWD). The 73-residue stretch at 63–135 (STTATEGHKP…EDFNFTVLPK (73 aa)) folds into the MBD domain. The segment covering 154–164 (QPNETDVSKQN) has biased composition (polar residues). 2 disordered regions span residues 154–195 (QPNE…SNSN) and 209–252 (DVDS…RKRA). Residues 178–195 (LPSGTSESPESSGLSNSN) show a composition bias toward low complexity. Residues Ser-296 and Ser-402 each carry the phosphoserine modification. Asp-534 is a catalytic residue.

As to quaternary structure, interacts with MLH1.

Its subcellular location is the nucleus. Its function is as follows. Mismatch-specific DNA N-glycosylase involved in DNA repair. Has thymine glycosylase activity and is specific for G:T mismatches within methylated and unmethylated CpG sites. Can also remove uracil or 5-fluorouracil in G:U mismatches. Has no lyase activity. Was first identified as methyl-CpG-binding protein. This chain is Methyl-CpG-binding domain protein 4 (Mbd4), found in Mus musculus (Mouse).